The sequence spans 62 residues: Translational regulator CsrA (62 aa).

It belongs to the CsrA/RsmA family. As to quaternary structure, homodimer; the beta-strands of each monomer intercalate to form a hydrophobic core, while the alpha-helices form wings that extend away from the core.

It localises to the cytoplasm. Functionally, a key translational regulator that binds mRNA to regulate translation initiation and/or mRNA stability. Mediates global changes in gene expression, shifting from rapid growth to stress survival by linking envelope stress, the stringent response and the catabolite repression systems. Usually binds in the 5'-UTR; binding at or near the Shine-Dalgarno sequence prevents ribosome-binding, repressing translation, binding elsewhere in the 5'-UTR can activate translation and/or stabilize the mRNA. Its function is antagonized by small RNA(s). The sequence is that of Translational regulator CsrA from Pasteurella multocida (strain Pm70).